The primary structure comprises 83 residues: Small ribosomal subunit protein bS16 (83 aa).

This sequence belongs to the bacterial ribosomal protein bS16 family.

This chain is Small ribosomal subunit protein bS16, found in Borrelia hermsii (strain HS1 / DAH).